The following is a 273-amino-acid chain: Small ribosomal subunit protein uS3 (273 aa).

A KH type-2 domain is found at 43-111 (IRQLMSTGME…QVQLNILEVK (69 aa)). A compositionally biased stretch (low complexity) spans 218 to 227 (QQAAAAPSRG). Residues 218 to 273 (QQAAAAPSRGRAGDRPGRPGGDRRRRNDRPAAEAAPAAVEAPAAEAAAPAAEGGQA) are disordered. The span at 228–239 (RAGDRPGRPGGD) shows a compositional bias: basic and acidic residues. Over residues 249 to 273 (AEAAPAAVEAPAAEAAAPAAEGGQA) the composition is skewed to low complexity.

The protein belongs to the universal ribosomal protein uS3 family. Part of the 30S ribosomal subunit. Forms a tight complex with proteins S10 and S14.

In terms of biological role, binds the lower part of the 30S subunit head. Binds mRNA in the 70S ribosome, positioning it for translation. In Paenarthrobacter aurescens (strain TC1), this protein is Small ribosomal subunit protein uS3.